The chain runs to 345 residues: MTDKTSLSYKDAGVDIDAGNALVDRIKGVVKKTRRPEVMGGLGGFGALCALPQKYREPVLVSGTDGVGTKLRLAMDLKRHDAIGIDLVAMCVNDLVVQGAEPLFFLDYYATGKLDVDTAASVINGIAEGCLQSGCALVGGETAEMPGMYHGEDYDVAGFCVGVVEKSEIIDGSRVAEGDVLIALGSSGPHSNGYSLVRKIIDVSGCDPQTTLLEGKPLADHLLEPTRIYVKSVLELIENIDVHAIAHLTGGGFWENIPRVLPENTQAVINESSWQWPAIFTWLQTAGNVSRHEMYRTFNCGVGMVIALSAPEADKALALLNEKGENAWKIGIIKASDSEQRVVIE.

Belongs to the AIR synthase family.

The protein localises to the cytoplasm. The catalysed reaction is 2-formamido-N(1)-(5-O-phospho-beta-D-ribosyl)acetamidine + ATP = 5-amino-1-(5-phospho-beta-D-ribosyl)imidazole + ADP + phosphate + H(+). The protein operates within purine metabolism; IMP biosynthesis via de novo pathway; 5-amino-1-(5-phospho-D-ribosyl)imidazole from N(2)-formyl-N(1)-(5-phospho-D-ribosyl)glycinamide: step 2/2. In Salmonella choleraesuis (strain SC-B67), this protein is Phosphoribosylformylglycinamidine cyclo-ligase.